Reading from the N-terminus, the 25-residue chain is Hemocyanin subunit 2 (25 aa).

It belongs to the tyrosinase family. Hemocyanin subfamily. Hemolymph.

It is found in the secreted. Its subcellular location is the extracellular space. Hemocyanins are copper-containing oxygen carriers occurring freely dissolved in the hemolymph of many mollusks and arthropods. This Carcinus maenas (Common shore crab) protein is Hemocyanin subunit 2.